Reading from the N-terminus, the 194-residue chain is E3 ubiquitin-protein ligase RNF4 (194 aa).

Basic residues predominate over residues 1–12; sequence MSTRNPQRKRRG. The segment at 1-20 is required for ubiquitination activity; that stretch reads MSTRNPQRKRRGGTVNSRQT. The segment at 1–39 is disordered; the sequence is MSTRNPQRKRRGGTVNSRQTQKRTRETTSTPEVSLETEP. The segment at 6 to 65 is mediates interaction with TRPS1; the sequence is PQRKRRGGTVNSRQTQKRTRETTSTPEVSLETEPIELVETVGDEIVDLTCESLEPVVVDL. Positions 40 to 43 match the SUMO interaction motif 1; mediates the binding to polysumoylated substrates motif; sequence IELV. Positions 50 to 53 match the SUMO interaction motif 2; mediates the binding to polysumoylated substrates motif; that stretch reads IVDL. The SUMO interaction motif 3; mediates the binding to polysumoylated substrates motif lies at 61–63; the sequence is VVV. The SUMO interaction motif 4; mediates the binding to polysumoylated substrates motif lies at 71-74; the sequence is VVIV. Phosphoserine is present on residues serine 98 and serine 99. The segment at 110 to 130 is disordered; sequence VYVTTHTPRSTKDDGATGPRP. Zn(2+) is bound by residues cysteine 136, cysteine 139, cysteine 158, histidine 160, cysteine 163, cysteine 166, cysteine 177, and cysteine 180. The segment at 136–181 adopts an RING-type zinc-finger fold; that stretch reads CPICMDGYSEIVQNGRLIVSTECGHVFCSQCLRDSLKNANTCPTCR.

In terms of assembly, homodimer (via RING-type zinc finger domain). Interacts with GSC2. Interacts with AR/the androgen receptor and TBP. Interacts with TCF20. Interacts with PATZ1. Interacts with TRPS1; negatively regulates TRPS1 transcriptional repressor activity. Interacts with PML (isoform PML-1, isoform PML-2, isoform PML-3, isoform PML-4, isoform PML-5 and isoform PML-6). Interacts with PRDM1/Blimp-1. Sumoylated; conjugated by one or two SUMO1 moieties. Post-translationally, autoubiquitinated. In terms of tissue distribution, in the embryo, expressed primarily in the developing nervous system with strong expression in the dorsal root ganglia and gonads. Ubiquitously expressed in the adult.

Its subcellular location is the cytoplasm. The protein localises to the nucleus. It is found in the PML body. It catalyses the reaction S-ubiquitinyl-[E2 ubiquitin-conjugating enzyme]-L-cysteine + [acceptor protein]-L-lysine = [E2 ubiquitin-conjugating enzyme]-L-cysteine + N(6)-ubiquitinyl-[acceptor protein]-L-lysine.. It participates in protein modification; protein ubiquitination. Functionally, E3 ubiquitin-protein ligase which binds polysumoylated chains covalently attached to proteins and mediates 'Lys-6'-, 'Lys-11'-, 'Lys-48'- and 'Lys-63'-linked polyubiquitination of those substrates and their subsequent targeting to the proteasome for degradation. Regulates the degradation of several proteins including PML and the transcriptional activator PEA3. Involved in chromosome alignment and spindle assembly, it regulates the kinetochore CENPH-CENPI-CENPK complex by targeting polysumoylated CENPI to proteasomal degradation. Regulates the cellular responses to hypoxia and heat shock through degradation of respectively EPAS1 and PARP1. Alternatively, it may also bind DNA/nucleosomes and have a more direct role in the regulation of transcription for instance enhancing basal transcription and steroid receptor-mediated transcriptional activation. Catalyzes ubiquitination of sumoylated PARP1 in response to PARP1 trapping to chromatin, leading to PARP1 removal from chromatin by VCP/p97. The chain is E3 ubiquitin-protein ligase RNF4 from Mus musculus (Mouse).